The primary structure comprises 311 residues: Vomeronasal type-1 receptor 3 (311 aa).

Residues 1–5 lie on the Extracellular side of the membrane; that stretch reads MASKD. Residues 6–26 traverse the membrane as a helical segment; it reads FAIGMILLSQIMVGFLGNFFL. Topologically, residues 27 to 51 are cytoplasmic; the sequence is LYHYSFLCFTRGMLQSTDLILKHLT. Residues 52 to 72 form a helical membrane-spanning segment; that stretch reads IANSLVILSKGIPQTMAAFGL. Residues 73 to 92 lie on the Extracellular side of the membrane; the sequence is KDSLSDIGCKFVFYVHRVGR. The chain crosses the membrane as a helical span at residues 93–113; sequence AVCVGNACLLSVFQVITISPS. The Cytoplasmic segment spans residues 114 to 130; that stretch reads EFRWAELKLHAHKYIRS. A helical membrane pass occupies residues 131–151; sequence FILVLCWILNTLVNITVLLHV. The Extracellular segment spans residues 152–187; sequence TGKWNSINSTKTNDYGYCSGGSRSRIPHSLHIVLLS. N-linked (GlcNAc...) asparagine glycosylation is present at Asn159. Residues 188–208 traverse the membrane as a helical segment; it reads SLDVLCLGLMTLASGSMVFIL. Residues 209-232 are Cytoplasmic-facing; that stretch reads HRHKQQVQHIHGTNLSARSSPESR. A helical transmembrane segment spans residues 233–249; sequence VTQSILVLVSTLCYFTR. Over 250-264 the chain is Extracellular; sequence SPPSLHMSLFPNPSW. Residues 265–285 traverse the membrane as a helical segment; the sequence is WLLNTSALITACFPMVSPFVL. Over 286–311 the chain is Cytoplasmic; it reads MSRHPRIPRLGSACCGRNPQFPKLVR.

The protein belongs to the G-protein coupled receptor 1 family.

It is found in the cell membrane. Functionally, putative pheromone receptor. This chain is Vomeronasal type-1 receptor 3 (VN1R3), found in Homo sapiens (Human).